We begin with the raw amino-acid sequence, 123 residues long: uncharacterized protein (123 aa).

The helical transmembrane segment at 14 to 34 threads the bilayer; that stretch reads VVLKITAVVCSVFSIRVLILA.

It localises to the membrane. This is an uncharacterized protein from Saccharomyces cerevisiae (strain ATCC 204508 / S288c) (Baker's yeast).